The primary structure comprises 158 residues: N-acetylgalactosamine-specific phosphotransferase enzyme IIB component 1 (158 aa).

Positions 1–158 constitute a PTS EIIB type-4 domain; that stretch reads MTSPNILLTR…PGDQKEQIPD (158 aa). The Pros-phosphohistidine intermediate role is filled by His17.

The protein resides in the cytoplasm. Functionally, the phosphoenolpyruvate-dependent sugar phosphotransferase system (sugar PTS), a major carbohydrate active -transport system, catalyzes the phosphorylation of incoming sugar substrates concomitantly with their translocation across the cell membrane. This system is involved in N-acetylgalactosamine transport. The sequence is that of N-acetylgalactosamine-specific phosphotransferase enzyme IIB component 1 (agaB) from Escherichia coli (strain K12).